Here is a 552-residue protein sequence, read N- to C-terminus: 3-hydroxy-3-methylglutaryl-coenzyme A reductase 1 (552 aa).

Low complexity-rich tracts occupy residues 79–99 and 112–122; these read QHNQQQQQKQQPSQDYIQQPQ and QQQQQQQQQQQ. The tract at residues 79-138 is disordered; the sequence is QHNQQQQQKQQPSQDYIQQPQNDNNINSGKEQEQQQQQQQQQQQTPDITNQPTKTNKKIP. Positions 123–132 are enriched in polar residues; the sequence is TPDITNQPTK. Glu237 functions as the Charge relay system in the catalytic mechanism. Residue Asn288 is glycosylated (N-linked (GlcNAc...) asparagine). The active-site Charge relay system is the Lys369. Asn375 carries N-linked (GlcNAc...) asparagine glycosylation. Asp445 functions as the Charge relay system in the catalytic mechanism. His543 functions as the Proton donor in the catalytic mechanism.

It belongs to the HMG-CoA reductase family.

Its subcellular location is the endoplasmic reticulum membrane. It catalyses the reaction (R)-mevalonate + 2 NADP(+) + CoA = (3S)-3-hydroxy-3-methylglutaryl-CoA + 2 NADPH + 2 H(+). Its pathway is metabolic intermediate biosynthesis; (R)-mevalonate biosynthesis; (R)-mevalonate from acetyl-CoA: step 3/3. Its function is as follows. This transmembrane glycoprotein is involved in the control of cholesterol biosynthesis. It is the rate-limiting enzyme of the sterol biosynthesis. The sequence is that of 3-hydroxy-3-methylglutaryl-coenzyme A reductase 1 (hmgA) from Dictyostelium discoideum (Social amoeba).